A 393-amino-acid polypeptide reads, in one-letter code: S-adenosylmethionine synthase 4 (393 aa).

Glutamate 9 contributes to the Mg(2+) binding site. Residue histidine 15 participates in ATP binding. Residue glutamate 43 coordinates K(+). Residues glutamate 56 and glutamine 99 each contribute to the L-methionine site. ATP-binding positions include aspartate 167–lysine 169, serine 235–phenylalanine 238, aspartate 246, arginine 252–lysine 253, alanine 269, lysine 273, and lysine 277. Aspartate 246 is a binding site for L-methionine. Lysine 277 lines the L-methionine pocket.

This sequence belongs to the AdoMet synthase family. In terms of assembly, homotetramer. It depends on Mn(2+) as a cofactor. Requires Mg(2+) as cofactor. The cofactor is Co(2+). K(+) serves as cofactor.

The protein localises to the cytoplasm. The enzyme catalyses L-methionine + ATP + H2O = S-adenosyl-L-methionine + phosphate + diphosphate. It participates in amino-acid biosynthesis; S-adenosyl-L-methionine biosynthesis; S-adenosyl-L-methionine from L-methionine: step 1/1. Functionally, catalyzes the formation of S-adenosylmethionine from methionine and ATP. The reaction comprises two steps that are both catalyzed by the same enzyme: formation of S-adenosylmethionine (AdoMet) and triphosphate, and subsequent hydrolysis of the triphosphate. The polypeptide is S-adenosylmethionine synthase 4 (METK4) (Vitis vinifera (Grape)).